The chain runs to 429 residues: SET domain-containing protein 14 (429 aa).

Residues Cys-26, Cys-29, Cys-39, Cys-42, Cys-48, Cys-52, His-60, and Cys-64 each contribute to the Zn(2+) site. The MYND-type zinc-finger motif lies at 26 to 64 (CNQCLTSMAELKKCSACRRLAYCSQECQRADWKLHKVEC).

The protein resides in the nucleus. The polypeptide is SET domain-containing protein 14 (set-14) (Caenorhabditis elegans).